A 176-amino-acid polypeptide reads, in one-letter code: Ribosome maturation factor RimM (176 aa).

A PRC barrel domain is found at 94-176 (KDEFFYFEIL…RFGFEILQNS (83 aa)).

The protein belongs to the RimM family. In terms of assembly, binds ribosomal protein uS19.

The protein localises to the cytoplasm. In terms of biological role, an accessory protein needed during the final step in the assembly of 30S ribosomal subunit, possibly for assembly of the head region. Essential for efficient processing of 16S rRNA. May be needed both before and after RbfA during the maturation of 16S rRNA. It has affinity for free ribosomal 30S subunits but not for 70S ribosomes. This is Ribosome maturation factor RimM from Campylobacter hominis (strain ATCC BAA-381 / DSM 21671 / CCUG 45161 / LMG 19568 / NCTC 13146 / CH001A).